Reading from the N-terminus, the 251-residue chain is Triosephosphate isomerase (251 aa).

Substrate is bound at residue 9–11; the sequence is NWK. Catalysis depends on His-94, which acts as the Electrophile. The active-site Proton acceptor is Glu-166. Substrate contacts are provided by residues Gly-172, Ser-211, and 232–233; that span reads GG.

This sequence belongs to the triosephosphate isomerase family. In terms of assembly, homodimer.

It is found in the cytoplasm. The enzyme catalyses D-glyceraldehyde 3-phosphate = dihydroxyacetone phosphate. Its pathway is carbohydrate biosynthesis; gluconeogenesis. It functions in the pathway carbohydrate degradation; glycolysis; D-glyceraldehyde 3-phosphate from glycerone phosphate: step 1/1. Functionally, involved in the gluconeogenesis. Catalyzes stereospecifically the conversion of dihydroxyacetone phosphate (DHAP) to D-glyceraldehyde-3-phosphate (G3P). In Stenotrophomonas maltophilia (strain R551-3), this protein is Triosephosphate isomerase.